Here is a 521-residue protein sequence, read N- to C-terminus: Probable methylmalonate-semialdehyde/malonate-semialdehyde dehydrogenase [acylating], mitochondrial (521 aa).

The NAD(+) site is built by Ala170, Phe172, Lys196, Glu199, Arg200, and Ser249. Cys304 serves as the catalytic Nucleophile. Residue Glu404 participates in NAD(+) binding.

This sequence belongs to the aldehyde dehydrogenase family. Homotetramer.

It is found in the mitochondrion. It catalyses the reaction 2-methyl-3-oxopropanoate + NAD(+) + CoA + H2O = propanoyl-CoA + hydrogencarbonate + NADH + H(+). The catalysed reaction is 3-oxopropanoate + NAD(+) + CoA + H2O = hydrogencarbonate + acetyl-CoA + NADH + H(+). Its function is as follows. Probable malonate and methylmalonate semialdehyde dehydrogenase involved in the catabolism of valine, thymine, and compounds catabolized by way of beta-alanine, including uracil and cytidine. In Anopheles gambiae (African malaria mosquito), this protein is Probable methylmalonate-semialdehyde/malonate-semialdehyde dehydrogenase [acylating], mitochondrial.